The following is a 130-amino-acid chain: Small ribosomal subunit protein uS8 (130 aa).

It belongs to the universal ribosomal protein uS8 family. Part of the 30S ribosomal subunit.

Functionally, one of the primary rRNA binding proteins, it binds directly to 16S rRNA central domain where it helps coordinate assembly of the platform of the 30S subunit. This is Small ribosomal subunit protein uS8 from Methanococcoides burtonii (strain DSM 6242 / NBRC 107633 / OCM 468 / ACE-M).